We begin with the raw amino-acid sequence, 288 residues long: Formamidopyrimidine-DNA glycosylase (288 aa).

Pro-2 serves as the catalytic Schiff-base intermediate with DNA. Residue Glu-3 is the Proton donor of the active site. Catalysis depends on Lys-59, which acts as the Proton donor; for beta-elimination activity. The DNA site is built by His-93, Arg-112, and Lys-168. The FPG-type zinc-finger motif lies at Asn-254–Arg-288. Arg-278 functions as the Proton donor; for delta-elimination activity in the catalytic mechanism.

It belongs to the FPG family. As to quaternary structure, monomer. The cofactor is Zn(2+).

The catalysed reaction is Hydrolysis of DNA containing ring-opened 7-methylguanine residues, releasing 2,6-diamino-4-hydroxy-5-(N-methyl)formamidopyrimidine.. It catalyses the reaction 2'-deoxyribonucleotide-(2'-deoxyribose 5'-phosphate)-2'-deoxyribonucleotide-DNA = a 3'-end 2'-deoxyribonucleotide-(2,3-dehydro-2,3-deoxyribose 5'-phosphate)-DNA + a 5'-end 5'-phospho-2'-deoxyribonucleoside-DNA + H(+). Involved in base excision repair of DNA damaged by oxidation or by mutagenic agents. Acts as a DNA glycosylase that recognizes and removes damaged bases. Has a preference for oxidized purines, such as 7,8-dihydro-8-oxoguanine (8-oxoG). Has AP (apurinic/apyrimidinic) lyase activity and introduces nicks in the DNA strand. Cleaves the DNA backbone by beta-delta elimination to generate a single-strand break at the site of the removed base with both 3'- and 5'-phosphates. This chain is Formamidopyrimidine-DNA glycosylase, found in Corynebacterium jeikeium (strain K411).